A 957-amino-acid polypeptide reads, in one-letter code: Glycine dehydrogenase (decarboxylating) (957 aa).

Residue K708 is modified to N6-(pyridoxal phosphate)lysine.

Belongs to the GcvP family. As to quaternary structure, the glycine cleavage system is composed of four proteins: P, T, L and H. The cofactor is pyridoxal 5'-phosphate.

The catalysed reaction is N(6)-[(R)-lipoyl]-L-lysyl-[glycine-cleavage complex H protein] + glycine + H(+) = N(6)-[(R)-S(8)-aminomethyldihydrolipoyl]-L-lysyl-[glycine-cleavage complex H protein] + CO2. Its function is as follows. The glycine cleavage system catalyzes the degradation of glycine. The P protein binds the alpha-amino group of glycine through its pyridoxal phosphate cofactor; CO(2) is released and the remaining methylamine moiety is then transferred to the lipoamide cofactor of the H protein. The sequence is that of Glycine dehydrogenase (decarboxylating) from Escherichia coli (strain UTI89 / UPEC).